The sequence spans 327 residues: MKKIAIDLMGGDYAPEEILAGALSFAKENEDVELYLVGIEENFKDVQLPKNCVKVVTDDFLPMDVKPTEAVRRRKSTMYVSCQLAREKKVDAVVSAGNTGALLACATFVVGRIKGIERPTLAVPIPTKNDFCVLADAGANIDVKPSNLLQFAIMGVEYAKLLGKDNPTIGLLNVGTEENKGTQKEKEAFQILKERFGNQFVGNVEGNDLNAGKVDVVVADGFHGNIAMKTMEGAAKMITELIKSEVKKNIISALGALLMKPVFSSLKNKLDPKKYGGTFFIGVEGVVVKAHGNSNRTAIFNALKVAKKGVEEKLPLKIKEALLKCAE.

Belongs to the PlsX family. As to quaternary structure, homodimer. Probably interacts with PlsY.

Its subcellular location is the cytoplasm. The catalysed reaction is a fatty acyl-[ACP] + phosphate = an acyl phosphate + holo-[ACP]. It participates in lipid metabolism; phospholipid metabolism. Its function is as follows. Catalyzes the reversible formation of acyl-phosphate (acyl-PO(4)) from acyl-[acyl-carrier-protein] (acyl-ACP). This enzyme utilizes acyl-ACP as fatty acyl donor, but not acyl-CoA. The polypeptide is Phosphate acyltransferase (Thermosipho africanus (strain TCF52B)).